The chain runs to 1615 residues: Mediator of RNA polymerase II transcription subunit 23 (1615 aa).

Disordered stretches follow at residues 40–67 (RQKP…DLPP) and 1230–1270 (SSSS…NASE). Residues 41–51 (QKPDESLRDPP) are compositionally biased toward basic and acidic residues. Positions 1230-1241 (SSSSNCSSRSGS) are enriched in low complexity.

The protein belongs to the Mediator complex subunit 23 family. In terms of assembly, component of the Mediator complex.

The protein localises to the nucleus. Functionally, component of the Mediator complex, a coactivator involved in the regulated transcription of nearly all RNA polymerase II-dependent genes. Mediator functions as a bridge to convey information from gene-specific regulatory proteins to the basal RNA polymerase II transcription machinery. The Mediator complex, having a compact conformation in its free form, is recruited to promoters by direct interactions with regulatory proteins and serves for the assembly of a functional preinitiation complex with RNA polymerase II and the general transcription factors. In Arabidopsis thaliana (Mouse-ear cress), this protein is Mediator of RNA polymerase II transcription subunit 23 (MED23).